A 560-amino-acid chain; its full sequence is Triacylglyceride transporter MSMEG_3069/MSMEI_2992 (560 aa).

Transmembrane regions (helical) follow at residues 16 to 36, 48 to 68, 78 to 98, 108 to 128, 143 to 163, 168 to 188, 200 to 220, 229 to 249, 269 to 289, 307 to 327, 336 to 356, 368 to 388, 411 to 431, and 477 to 497; these read LAVLLGALDTYVVITIIVDIM, QVTPIITGYLLGYIAAMPLLG, MLIQVGLAGFAVGSVVTALSS, IIQGSASGALLPVTLALAADL, AAQELGAVLGPMYGIALVWLF, AVFWVNVPLAVIAMVMIHFSL, VDVIGGVLLAIALGLTVVGLY, VLPSWGLPVLAGALVAAVAFF, PFLAALAASLCAGAALMVTLV, AFLLLRFLIALPIGALIGGWL, VVLIGLLIAAGGFVLISHWSV, FTLPVLDTDLAIVGLGLGLVI, VVVARMIGMLIGIAALGAWGF, and IFLSAAVVCVIGALLGLLISG. The beta-hairpin stretch occupies residues 362–371; sequence RHNLGLFTLP. The interval 519 to 560 is disordered; the sequence is IDPYDAGDADDAPTEMLDLPTQVLSAPPSDPGDERPGRHRAP.

This sequence belongs to the major facilitator superfamily. P55 (TC 2.A.1.3.34) family.

Its subcellular location is the cell inner membrane. Its activity is regulated as follows. Resistance to ethidium bromide is inhibited by reserpine. In terms of biological role, in association with lipoprotein LprG transports triacyglycerides (TAG) across the inner cell membrane into the periplasm; TAG probably regulates lipid metabolism and growth regulation and plays a structural role in the outer membrane. TAG (and maybe other lipids) enters the central cavity of the P55 transporter from within the cell inner membrane via clefts on the cytoplasmic face of P55 between TM5-TM8 and TM2-TM11. From there the lipid is probably transferred to the hydrophobic cavity of LprG. Confers resistance to ethidium bromide, possibly acting as an efflux pump, requires LprG lipoprotein for normal function. Export of ethidium bromide can be complemented by the equivalent operon from M.tuberculosis (lprG-Rv1410c). Involved in drug susceptibilty, its expression alone partially complements the antibiotic susceptibilty of a double lprG-mfs deletion. Probably does not function as a bona fide drug efflux pump, but instead plays a role in outer membrane biogenesis. Probably required with LprG for normal surface localization of lipoarabinomannan (LAM). This is Triacylglyceride transporter MSMEG_3069/MSMEI_2992 from Mycolicibacterium smegmatis (strain ATCC 700084 / mc(2)155) (Mycobacterium smegmatis).